A 420-amino-acid polypeptide reads, in one-letter code: UDP-N-acetylmuramoylalanine--D-glutamate ligase (420 aa).

ATP is bound at residue 109–115 (GSAGKTT).

Belongs to the MurCDEF family.

It is found in the cytoplasm. The enzyme catalyses UDP-N-acetyl-alpha-D-muramoyl-L-alanine + D-glutamate + ATP = UDP-N-acetyl-alpha-D-muramoyl-L-alanyl-D-glutamate + ADP + phosphate + H(+). Its pathway is cell wall biogenesis; peptidoglycan biosynthesis. Its function is as follows. Cell wall formation. Catalyzes the addition of glutamate to the nucleotide precursor UDP-N-acetylmuramoyl-L-alanine (UMA). In Chlamydia abortus (strain DSM 27085 / S26/3) (Chlamydophila abortus), this protein is UDP-N-acetylmuramoylalanine--D-glutamate ligase.